The chain runs to 78 residues: Large ribosomal subunit protein bL28 (78 aa).

This sequence belongs to the bacterial ribosomal protein bL28 family.

The polypeptide is Large ribosomal subunit protein bL28 (Pseudoalteromonas atlantica (strain T6c / ATCC BAA-1087)).